A 210-amino-acid polypeptide reads, in one-letter code: Large ribosomal subunit protein uL3 (210 aa).

Residues 125 to 151 are disordered; that stretch reads RHGQSRGPMSHGSRYHRRPGSMGPVAP.

This sequence belongs to the universal ribosomal protein uL3 family. Part of the 50S ribosomal subunit. Forms a cluster with proteins L14 and L19.

Functionally, one of the primary rRNA binding proteins, it binds directly near the 3'-end of the 23S rRNA, where it nucleates assembly of the 50S subunit. This Bacillus cereus (strain Q1) protein is Large ribosomal subunit protein uL3.